Reading from the N-terminus, the 235-residue chain is MGMLAPGPLQGRRPRKGHKGQEDAVAPGCKASGRGSRVTHLLGYPTQNVSRSLRRKYAPPPCGGPEDVALAPCTAAAACEAGPSPVYVKVKSAEPADCAEGPVQCKNGLLVSSPHCEEPCAHSCAHPGLPPHLVHKLPLSYLQTQDTDAASRRINAPLAAGWSWLRLWLVTLASGVDFPQVSAWMRALPSPDCPGLRTTGEQMQKLLLKENKVKTRKSKRRSGEGSHLTTSILEQ.

2 disordered regions span residues 1-36 and 213-235; these read MGML…GRGS and VKTR…ILEQ.

This is an uncharacterized protein from Homo sapiens (Human).